The primary structure comprises 652 residues: Acetyl-coenzyme A synthetase (652 aa).

Residues 191–194 (RAGR), threonine 311, and asparagine 335 each bind CoA. Residues 387–389 (GEP), 411–416 (DTWWQT), aspartate 500, and arginine 515 each bind ATP. A CoA-binding site is contributed by serine 523. Residue arginine 526 participates in ATP binding. Valine 537, histidine 539, and isoleucine 542 together coordinate Mg(2+). Arginine 584 contacts CoA. Position 609 is an N6-acetyllysine (lysine 609).

Belongs to the ATP-dependent AMP-binding enzyme family. Mg(2+) is required as a cofactor. Post-translationally, acetylated. Deacetylation by the SIR2-homolog deacetylase activates the enzyme.

It carries out the reaction acetate + ATP + CoA = acetyl-CoA + AMP + diphosphate. Its function is as follows. Catalyzes the conversion of acetate into acetyl-CoA (AcCoA), an essential intermediate at the junction of anabolic and catabolic pathways. Acs undergoes a two-step reaction. In the first half reaction, Acs combines acetate with ATP to form acetyl-adenylate (AcAMP) intermediate. In the second half reaction, it can then transfer the acetyl group from AcAMP to the sulfhydryl group of CoA, forming the product AcCoA. Enables the cell to use acetate during aerobic growth to generate energy via the TCA cycle, and biosynthetic compounds via the glyoxylate shunt. Acetylates CheY, the response regulator involved in flagellar movement and chemotaxis. In Cronobacter sakazakii (strain ATCC BAA-894) (Enterobacter sakazakii), this protein is Acetyl-coenzyme A synthetase.